Consider the following 928-residue polypeptide: DNA polymerase I (928 aa).

Residues 1–323 (MVQIPENPLI…IDESPSEPAA (323 aa)) form the 5'-3' exonuclease domain. In terms of domain architecture, 3'-5' exonuclease spans 324 to 517 (ALSYENYVTI…LHLKMWPELQ (194 aa)). The interval 324 to 928 (ALSYENYVTI…GSGENWDQAH (605 aa)) is klenow fragment. The segment at 521 to 928 (GPLNVFENIE…GSGENWDQAH (408 aa)) is polymerase.

Belongs to the DNA polymerase type-A family. Single-chain monomer with multiple functions.

The enzyme catalyses DNA(n) + a 2'-deoxyribonucleoside 5'-triphosphate = DNA(n+1) + diphosphate. In addition to polymerase activity, this DNA polymerase exhibits 3'-5' and 5'-3' exonuclease activity. It is able to utilize nicked circular duplex DNA as a template and can unwind the parental DNA strand from its template. This chain is DNA polymerase I (polA), found in Salmonella typhimurium (strain LT2 / SGSC1412 / ATCC 700720).